Consider the following 208-residue polypeptide: Ribosomal RNA small subunit methyltransferase G (208 aa).

S-adenosyl-L-methionine is bound by residues glycine 77, leucine 82, 128–129 (VE), and arginine 142.

It belongs to the methyltransferase superfamily. RNA methyltransferase RsmG family.

It is found in the cytoplasm. It carries out the reaction guanosine(527) in 16S rRNA + S-adenosyl-L-methionine = N(7)-methylguanosine(527) in 16S rRNA + S-adenosyl-L-homocysteine. Specifically methylates the N7 position of guanine in position 527 of 16S rRNA. This is Ribosomal RNA small subunit methyltransferase G from Chromohalobacter salexigens (strain ATCC BAA-138 / DSM 3043 / CIP 106854 / NCIMB 13768 / 1H11).